Consider the following 429-residue polypeptide: Probable M18 family aminopeptidase 2 (429 aa).

Residues H82, H156, and H401 each contribute to the Zn(2+) site.

This sequence belongs to the peptidase M18 family. It depends on Zn(2+) as a cofactor.

The polypeptide is Probable M18 family aminopeptidase 2 (Pseudomonas savastanoi pv. phaseolicola (strain 1448A / Race 6) (Pseudomonas syringae pv. phaseolicola (strain 1448A / Race 6))).